The primary structure comprises 72 residues: DNA-directed RNA polymerase subunit omega (72 aa).

It belongs to the RNA polymerase subunit omega family. The RNAP catalytic core consists of 2 alpha, 1 beta, 1 beta' and 1 omega subunit. When a sigma factor is associated with the core the holoenzyme is formed, which can initiate transcription.

It carries out the reaction RNA(n) + a ribonucleoside 5'-triphosphate = RNA(n+1) + diphosphate. Its function is as follows. Promotes RNA polymerase assembly. Latches the N- and C-terminal regions of the beta' subunit thereby facilitating its interaction with the beta and alpha subunits. The chain is DNA-directed RNA polymerase subunit omega from Clostridium kluyveri (strain NBRC 12016).